The primary structure comprises 196 residues: UDP-N-acetylglucosamine transferase subunit ALG13 (196 aa).

The protein belongs to the glycosyltransferase 28 family. Heterodimer with ALG14 to form a functional enzyme.

It localises to the endoplasmic reticulum. It catalyses the reaction an N-acetyl-alpha-D-glucosaminyl-diphospho-di-trans,poly-cis-dolichol + UDP-N-acetyl-alpha-D-glucosamine = an N,N'-diacetylchitobiosyl-diphospho-di-trans,poly-cis-dolichol + UDP + H(+). Its function is as follows. Involved in protein N-glycosylation. Essential for the second step of the dolichol-linked oligosaccharide pathway. The polypeptide is UDP-N-acetylglucosamine transferase subunit ALG13 (ALG13) (Yarrowia lipolytica (strain CLIB 122 / E 150) (Yeast)).